We begin with the raw amino-acid sequence, 72 residues long: Translation initiation factor IF-1 (72 aa).

Residues 1–72 form the S1-like domain; that stretch reads MIKEDNIEMH…SKGRIIFRSR (72 aa).

Belongs to the IF-1 family. In terms of assembly, component of the 30S ribosomal translation pre-initiation complex which assembles on the 30S ribosome in the order IF-2 and IF-3, IF-1 and N-formylmethionyl-tRNA(fMet); mRNA recruitment can occur at any time during PIC assembly.

It localises to the cytoplasm. Functionally, one of the essential components for the initiation of protein synthesis. Stabilizes the binding of IF-2 and IF-3 on the 30S subunit to which N-formylmethionyl-tRNA(fMet) subsequently binds. Helps modulate mRNA selection, yielding the 30S pre-initiation complex (PIC). Upon addition of the 50S ribosomal subunit IF-1, IF-2 and IF-3 are released leaving the mature 70S translation initiation complex. In Blochmanniella floridana, this protein is Translation initiation factor IF-1.